Consider the following 120-residue polypeptide: Chaperonin GroEL (120 aa).

Position 23 to 27 (23 to 27) interacts with ATP; it reads DGTTT.

It belongs to the chaperonin (HSP60) family. As to quaternary structure, forms a cylinder of 14 subunits composed of two heptameric rings stacked back-to-back. Interacts with the co-chaperonin GroES.

The protein localises to the cytoplasm. It carries out the reaction ATP + H2O + a folded polypeptide = ADP + phosphate + an unfolded polypeptide.. Functionally, together with its co-chaperonin GroES, plays an essential role in assisting protein folding. The GroEL-GroES system forms a nano-cage that allows encapsulation of the non-native substrate proteins and provides a physical environment optimized to promote and accelerate protein folding. The chain is Chaperonin GroEL from Mycolicibacterium pulveris (Mycobacterium pulveris).